The sequence spans 351 residues: L-threonine 3-dehydrogenase (351 aa).

Residue cysteine 39 coordinates Zn(2+). Residues threonine 41 and histidine 44 each act as charge relay system in the active site. Zn(2+) is bound by residues histidine 64, glutamate 65, cysteine 94, cysteine 97, cysteine 100, and cysteine 108. Residues isoleucine 176, aspartate 196, arginine 201, 271–273 (LGI), and 295–296 (IY) contribute to the NAD(+) site.

This sequence belongs to the zinc-containing alcohol dehydrogenase family. Homotetramer. Zn(2+) is required as a cofactor.

Its subcellular location is the cytoplasm. It carries out the reaction L-threonine + NAD(+) = (2S)-2-amino-3-oxobutanoate + NADH + H(+). It functions in the pathway amino-acid degradation; L-threonine degradation via oxydo-reductase pathway; glycine from L-threonine: step 1/2. In terms of biological role, catalyzes the NAD(+)-dependent oxidation of L-threonine to 2-amino-3-ketobutyrate. In Francisella tularensis subsp. tularensis (strain SCHU S4 / Schu 4), this protein is L-threonine 3-dehydrogenase.